Reading from the N-terminus, the 222-residue chain is Vespryn (222 aa).

The signal sequence occupies residues 1 to 44; it reads MSPSAGLQFSLYFLQTKKVLWKLTDKEKGLCYILLFTLCFFADQ. Residues 45–52 constitute a propeptide that is removed on maturation; sequence ENGGKALA. In terms of domain architecture, B30.2/SPRY spans 53–159; that stretch reads SPPGIWKRAD…RIWQMGLWWL (107 aa). A propeptide spanning residues 160–222 is cleaved from the precursor; that stretch reads RHLETDPGRV…LGGTVSLTTL (63 aa). The N-linked (GlcNAc...) asparagine glycan is linked to N195.

Belongs to the ohanin/vespryn family. As to expression, expressed by the venom gland.

The protein localises to the secreted. In terms of biological role, neurotoxin that produces dose-dependent hypolocomotion and hyperalgesia in mice. May directly act on the central nervous system, as it is 6500-fold more potent when administered intracerebroventricularly than intraperitoneal. In Crotalus adamanteus (Eastern diamondback rattlesnake), this protein is Vespryn.